The chain runs to 319 residues: Probable arabinan endo-1,5-alpha-L-arabinosidase C (319 aa).

The first 16 residues, 1 to 16, serve as a signal peptide directing secretion; sequence MFVYTLIFLFLAAANA. Asp-31 (proton acceptor) is an active-site residue. A glycan (N-linked (GlcNAc...) asparagine) is linked at Asn-190. The Proton donor role is filled by Glu-198. The N-linked (GlcNAc...) asparagine glycan is linked to Asn-222.

This sequence belongs to the glycosyl hydrolase 43 family.

The protein localises to the secreted. The enzyme catalyses Endohydrolysis of (1-&gt;5)-alpha-arabinofuranosidic linkages in (1-&gt;5)-arabinans.. It participates in glycan metabolism; L-arabinan degradation. Endo-1,5-alpha-L-arabinanase involved in degradation of pectin. Its preferred substrate is linear 1,5-alpha-L-arabinan. This is Probable arabinan endo-1,5-alpha-L-arabinosidase C (abnC) from Aspergillus clavatus (strain ATCC 1007 / CBS 513.65 / DSM 816 / NCTC 3887 / NRRL 1 / QM 1276 / 107).